We begin with the raw amino-acid sequence, 56 residues long: Large ribosomal subunit protein bL32 (56 aa).

The tract at residues 1–21 is disordered; sequence MGVPQRRQSHARKNKRRSEWR. Residues 7–19 show a composition bias toward basic residues; that stretch reads RQSHARKNKRRSE.

The protein belongs to the bacterial ribosomal protein bL32 family.

This chain is Large ribosomal subunit protein bL32, found in Syntrophomonas wolfei subsp. wolfei (strain DSM 2245B / Goettingen).